The following is a 356-amino-acid chain: tRNA-specific 2-thiouridylase MnmA (356 aa).

ATP-binding positions include 6–13 (GMSGGVDS) and Leu32. Cys102 functions as the Nucleophile in the catalytic mechanism. An intrachain disulfide couples Cys102 to Cys200. Gly127 is an ATP binding site. Positions 150 to 152 (RDQ) are interaction with tRNA. The Cysteine persulfide intermediate role is filled by Cys200. The interval 302–303 (RY) is interaction with tRNA.

It belongs to the MnmA/TRMU family.

The protein resides in the cytoplasm. The enzyme catalyses S-sulfanyl-L-cysteinyl-[protein] + uridine(34) in tRNA + AH2 + ATP = 2-thiouridine(34) in tRNA + L-cysteinyl-[protein] + A + AMP + diphosphate + H(+). Catalyzes the 2-thiolation of uridine at the wobble position (U34) of tRNA, leading to the formation of s(2)U34. The sequence is that of tRNA-specific 2-thiouridylase MnmA from Aquifex aeolicus (strain VF5).